The sequence spans 489 residues: Protein nucleotidyltransferase YdiU (489 aa).

The ATP site is built by Gly-88, Gly-90, Arg-91, Lys-111, Asp-123, Gly-124, Arg-174, and Arg-181. Asp-250 functions as the Proton acceptor in the catalytic mechanism. The Mg(2+) site is built by Asn-251 and Asp-260. An ATP-binding site is contributed by Asp-260.

It belongs to the SELO family. The cofactor is Mg(2+). It depends on Mn(2+) as a cofactor.

It catalyses the reaction L-seryl-[protein] + ATP = 3-O-(5'-adenylyl)-L-seryl-[protein] + diphosphate. The enzyme catalyses L-threonyl-[protein] + ATP = 3-O-(5'-adenylyl)-L-threonyl-[protein] + diphosphate. The catalysed reaction is L-tyrosyl-[protein] + ATP = O-(5'-adenylyl)-L-tyrosyl-[protein] + diphosphate. It carries out the reaction L-histidyl-[protein] + UTP = N(tele)-(5'-uridylyl)-L-histidyl-[protein] + diphosphate. It catalyses the reaction L-seryl-[protein] + UTP = O-(5'-uridylyl)-L-seryl-[protein] + diphosphate. The enzyme catalyses L-tyrosyl-[protein] + UTP = O-(5'-uridylyl)-L-tyrosyl-[protein] + diphosphate. Its function is as follows. Nucleotidyltransferase involved in the post-translational modification of proteins. It can catalyze the addition of adenosine monophosphate (AMP) or uridine monophosphate (UMP) to a protein, resulting in modifications known as AMPylation and UMPylation. This chain is Protein nucleotidyltransferase YdiU, found in Vibrio parahaemolyticus serotype O3:K6 (strain RIMD 2210633).